Here is a 489-residue protein sequence, read N- to C-terminus: Ammonium transporter MEP3 (489 aa).

At 1–17 (MARGDGHLWTETYDSST) the chain is on the extracellular side. Residues 18-38 (VAFMILGAALVFFMVPGLGFL) form a helical membrane-spanning segment. At 39-48 (YSGLARRKSA) the chain is on the cytoplasmic side. A helical membrane pass occupies residues 49-69 (LALIWVVIMATLVGILQWYFW). The Extracellular segment spans residues 70-108 (GYSLAFSKTATNNKFIGNLDSFGFRNVYGKISDDSTYPE). A helical transmembrane segment spans residues 109 to 129 (LIYAIFQMMFMCVALSIIAGA). Over 130–139 (TAERGKLFPH) the chain is Cytoplasmic. The chain crosses the membrane as a helical span at residues 140–160 (MVFLFVFATLVYCPITYWIWA). Topologically, residues 161 to 173 (PGGWAYQWGVLDW) are extracellular. Residues 174 to 194 (AGGGNIEILSAVAGFVYSYFL) traverse the membrane as a helical segment. Residues 195 to 209 (GRRKENLLINFRPHN) lie on the Cytoplasmic side of the membrane. Residues 210 to 230 (VSMVTLGTSILWFGWLLFNAA) traverse the membrane as a helical segment. At 231–239 (SSLSPNMRS) the chain is on the extracellular side. A helical transmembrane segment spans residues 240 to 260 (VYAFMNTCLSATTGGMTWCLL). Topologically, residues 261-267 (DYRSEKK) are cytoplasmic. Residues 268–288 (WSTVGLCSGIICGLVAATPSS) form a helical membrane-spanning segment. G289 is a topological domain (extracellular). Residues 290 to 310 (CITLYGSLIQGIIAGVVCNFA) traverse the membrane as a helical segment. Topologically, residues 311-330 (TKIKYYLKVDDSLDLLAEHG) are cytoplasmic. A helical membrane pass occupies residues 331 to 351 (IAGVVGLIFNALFAADWVIGM). Over 352-372 (DGTTKHKGGWLTHNWKQMYIQ) the chain is Extracellular. A helical transmembrane segment spans residues 373-393 (IAYIGASAGYCAVVTAIICFV). The Cytoplasmic portion of the chain corresponds to 394–489 (LGKIPGVHLR…NPKLHHAKEA (96 aa)). The span at 448-481 (GANSASETNPTEDSQNSSLSSATVSGQNEKSNNP) shows a compositional bias: polar residues. The disordered stretch occupies residues 448 to 489 (GANSASETNPTEDSQNSSLSSATVSGQNEKSNNPKLHHAKEA).

The protein belongs to the ammonia transporter channel (TC 1.A.11.2) family.

It is found in the membrane. Its function is as follows. Transporter for ammonium (both charged and uncharged NH3 and NH4) to use as a nitrogen source. The affinity of MEP2 is about twenty times higher than that of MEP1. MEP3 has the lowest affinity. The polypeptide is Ammonium transporter MEP3 (MEP3) (Saccharomyces cerevisiae (strain ATCC 204508 / S288c) (Baker's yeast)).